A 552-amino-acid polypeptide reads, in one-letter code: Cation/acetate symporter ActP (552 aa).

The next 14 helical transmembrane spans lie at 5-25 (FMMLFGLLTLPVLAWAADALT), 35-55 (IQAIVMFLLFVGGTLYITYWA), 78-98 (GLAIAGDYMSAASFLGISALV), 105-125 (GLIYSLGFLVGWPIILFLIAE), 151-171 (LSACGSLVVVALYLIAQMVGA), 185-205 (VAVILVGILMVMYVMFGGMLA), 208-228 (WVQIIKAVLLLFGATFMAVMV), 264-284 (ISALSLGLGLMFGTAGLPHIL), 305-325 (GFMGYFYFLTFIIGFGAILLV), 357-377 (FFLGFISAVAFATILAVVAGL), 407-427 (VSKITVLVLGVVAISLGILFE), 431-451 (IAFMVGLAFSIAASCNFPIII), 466-486 (IGGWAGLLTAVILMILGPTIW), and 499-519 (YDYPALFSMLVAFIGIWFFSI).

It belongs to the sodium:solute symporter (SSF) (TC 2.A.21) family.

The protein resides in the cell inner membrane. In terms of biological role, transports acetate. The chain is Cation/acetate symporter ActP from Pectobacterium carotovorum subsp. carotovorum (strain PC1).